Reading from the N-terminus, the 33-residue chain is Protamine-1A (33 aa).

A disordered region spans residues 1–33 (PRRRRSSSRPVRRRRRPRRVSRRRRRRGGRRRR).

Testis.

The protein localises to the nucleus. It localises to the chromosome. Functionally, protamines substitute for histones in the chromatin of sperm during the haploid phase of spermatogenesis. They compact sperm DNA into a highly condensed, stable and inactive complex. This Oncorhynchus mykiss (Rainbow trout) protein is Protamine-1A.